The chain runs to 381 residues: Chaperone protein DnaJ (381 aa).

The 66-residue stretch at Asp-5–Gly-70 folds into the J domain. The CR-type zinc-finger motif lies at Gly-137–Thr-215. The Zn(2+) site is built by Cys-150, Cys-153, Cys-167, Cys-170, Cys-189, Cys-192, Cys-203, and Cys-206. 4 CXXCXGXG motif repeats span residues Cys-150–Gly-157, Cys-167–Gly-174, Cys-189–Gly-196, and Cys-203–Gly-210.

The protein belongs to the DnaJ family. In terms of assembly, homodimer. Requires Zn(2+) as cofactor.

Its subcellular location is the cytoplasm. Functionally, participates actively in the response to hyperosmotic and heat shock by preventing the aggregation of stress-denatured proteins and by disaggregating proteins, also in an autonomous, DnaK-independent fashion. Unfolded proteins bind initially to DnaJ; upon interaction with the DnaJ-bound protein, DnaK hydrolyzes its bound ATP, resulting in the formation of a stable complex. GrpE releases ADP from DnaK; ATP binding to DnaK triggers the release of the substrate protein, thus completing the reaction cycle. Several rounds of ATP-dependent interactions between DnaJ, DnaK and GrpE are required for fully efficient folding. Also involved, together with DnaK and GrpE, in the DNA replication of plasmids through activation of initiation proteins. This chain is Chaperone protein DnaJ, found in Chromohalobacter salexigens (strain ATCC BAA-138 / DSM 3043 / CIP 106854 / NCIMB 13768 / 1H11).